Consider the following 196-residue polypeptide: Peptidyl-tRNA hydrolase (196 aa).

Tyr-17 contacts tRNA. His-22 serves as the catalytic Proton acceptor. TRNA-binding residues include Phe-68, Asn-70, and Asn-116.

It belongs to the PTH family. Monomer.

The protein localises to the cytoplasm. It carries out the reaction an N-acyl-L-alpha-aminoacyl-tRNA + H2O = an N-acyl-L-amino acid + a tRNA + H(+). Its function is as follows. Hydrolyzes ribosome-free peptidyl-tRNAs (with 1 or more amino acids incorporated), which drop off the ribosome during protein synthesis, or as a result of ribosome stalling. In terms of biological role, catalyzes the release of premature peptidyl moieties from peptidyl-tRNA molecules trapped in stalled 50S ribosomal subunits, and thus maintains levels of free tRNAs and 50S ribosomes. The protein is Peptidyl-tRNA hydrolase of Photorhabdus laumondii subsp. laumondii (strain DSM 15139 / CIP 105565 / TT01) (Photorhabdus luminescens subsp. laumondii).